We begin with the raw amino-acid sequence, 448 residues long: Divalent metal cation transporter MntH (448 aa).

11 helical membrane passes run 41-61 (LFAF…PGNW), 69-89 (SEFG…AVLL), 117-137 (GFVL…AEVI), 147-167 (FGIP…LVLF), 176-196 (IEVI…AEMV), 215-235 (IVTN…TVMP), 270-290 (FSLT…AAAF), 307-327 (LLNP…ALLA), 363-383 (VLAI…GINE), 384-404 (LLIF…IPLV), and 424-444 (IISW…LFYT).

It belongs to the NRAMP family.

Its subcellular location is the cell membrane. Its function is as follows. H(+)-stimulated, divalent metal cation uptake system. This chain is Divalent metal cation transporter MntH, found in Listeria welshimeri serovar 6b (strain ATCC 35897 / DSM 20650 / CCUG 15529 / CIP 8149 / NCTC 11857 / SLCC 5334 / V8).